The chain runs to 359 residues: Quinolinate synthase (359 aa).

2 residues coordinate iminosuccinate: His81 and Ser99. A [4Fe-4S] cluster-binding site is contributed by Cys144. Iminosuccinate is bound by residues 170–172 and Ser187; that span reads YVN. Cys229 serves as a coordination point for [4Fe-4S] cluster. Iminosuccinate is bound by residues 255–257 and Thr272; that span reads HPE. Position 315 (Cys315) interacts with [4Fe-4S] cluster.

Belongs to the quinolinate synthase family. Type 2 subfamily. The cofactor is [4Fe-4S] cluster.

It localises to the cytoplasm. It carries out the reaction iminosuccinate + dihydroxyacetone phosphate = quinolinate + phosphate + 2 H2O + H(+). It participates in cofactor biosynthesis; NAD(+) biosynthesis; quinolinate from iminoaspartate: step 1/1. Functionally, catalyzes the condensation of iminoaspartate with dihydroxyacetone phosphate to form quinolinate. This is Quinolinate synthase from Sinorhizobium fredii (strain NBRC 101917 / NGR234).